A 419-amino-acid polypeptide reads, in one-letter code: MSEEEKKVYLEDWRSAKEWGGFLYSIERWERIAEVEKIVCNACKEICLGLREEELLGLLAEGGMKKTLKEEFSEDKAKDARYLEYIVVDDVLLLDAHREYGGEVTKELVRQMLLGKEGKDIDKRYVDRVAGVVRERQRKREEETERSVKELVGDEEKAKSKEEKAKSKRGRKGKSASAPSEQEEEKKESEVEEAEQGGEVEALPVEVGGARSKGGKKKSKGGRKCFKIHRRVLRWTKSPEKIKEEWDKGSEERWKGRSLEEIKEQKIVHDITGVLELLRSEDADRFFMDAGKYRKGGSERQRMVAIGALETGGQRMTGVVEVGTFKDGDGCPVVYHLRFKPTSIGSIGDVINPGVVEASDVGRVDEGEECEDADKFVYPKGVRFETVKETGSFQIVWKNPSDTSEVLRRLIVYCRPCVI.

Positions Arg136–Ala165 are enriched in basic and acidic residues. Positions Arg136–Gly222 are disordered. Residues Lys213 to Gly222 show a composition bias toward basic residues.

This sequence belongs to the UPF0329 family.

In Encephalitozoon cuniculi (strain GB-M1) (Microsporidian parasite), this protein is UPF0329 protein ECU07_1890/ECU10_0010.